The following is a 122-amino-acid chain: Probable dihydroneopterin aldolase (122 aa).

Substrate is bound by residues Glu21, Tyr54, and Leu73 to Glu74. Lys101 serves as the catalytic Proton donor/acceptor.

Belongs to the DHNA family.

The enzyme catalyses 7,8-dihydroneopterin = 6-hydroxymethyl-7,8-dihydropterin + glycolaldehyde. It functions in the pathway cofactor biosynthesis; tetrahydrofolate biosynthesis; 2-amino-4-hydroxy-6-hydroxymethyl-7,8-dihydropteridine diphosphate from 7,8-dihydroneopterin triphosphate: step 3/4. Catalyzes the conversion of 7,8-dihydroneopterin to 6-hydroxymethyl-7,8-dihydropterin. In Chlamydia muridarum (strain MoPn / Nigg), this protein is Probable dihydroneopterin aldolase (folB).